The sequence spans 360 residues: Peptide chain release factor 1 (360 aa).

N5-methylglutamine is present on Gln236.

It belongs to the prokaryotic/mitochondrial release factor family. In terms of processing, methylated by PrmC. Methylation increases the termination efficiency of RF1.

It localises to the cytoplasm. In terms of biological role, peptide chain release factor 1 directs the termination of translation in response to the peptide chain termination codons UAG and UAA. This chain is Peptide chain release factor 1, found in Lactiplantibacillus plantarum (strain ATCC BAA-793 / NCIMB 8826 / WCFS1) (Lactobacillus plantarum).